The chain runs to 270 residues: Tetraspanin-17 (270 aa).

Residues 1 to 19 (MPGKHQHFQEPEVGCCGKY) are Cytoplasmic-facing. The chain crosses the membrane as a helical span at residues 20-40 (FLFGFNIVFWVLGALFLAIGL). The Extracellular segment spans residues 41 to 63 (WAWSEKGVLSNISALTDLGGLDP). A glycan (N-linked (GlcNAc...) asparagine) is linked at Asn51. The chain crosses the membrane as a helical span at residues 64-84 (VWLFVVVGGVMSVLGFAGCIG). Residues 85–94 (ALRENTFLLK) are Cytoplasmic-facing. The chain crosses the membrane as a helical span at residues 95–115 (FFSVFLGLIFFLELATGILAF). The Extracellular portion of the chain corresponds to 116 to 234 (VFKDWIRDQL…GQFEKWLQDN (119 aa)). 4 disulfides stabilise this stretch: Cys155–Cys223, Cys156–Cys188, Cys172–Cys182, and Cys189–Cys202. Asn171 carries an N-linked (GlcNAc...) asparagine glycan. A helical membrane pass occupies residues 235–255 (LIVVAGVFVGIALLQIFGICL). Residues 256 to 270 (AQNLVSDIKAVKANW) lie on the Cytoplasmic side of the membrane.

This sequence belongs to the tetraspanin (TM4SF) family. In terms of assembly, interacts with ADAM10; the interaction influences ADAM10 substrate specificity, endocytosis and turnover.

Its subcellular location is the cell membrane. In terms of biological role, part of TspanC8 subgroup, composed of 6 members that interact with the transmembrane metalloprotease ADAM10. This interaction is required for ADAM10 exit from the endoplasmic reticulum and for enzymatic maturation and trafficking to the cell surface as well as substrate specificity. Different TspanC8/ADAM10 complexes have distinct substrates. Seems to regulate VE-cadherin expression in endothelial cells probably through interaction with ADAM10, promoting leukocyte transmigration. This is Tetraspanin-17 (TSPAN17) from Bos taurus (Bovine).